Reading from the N-terminus, the 118-residue chain is MDVFLMIRRHKTTIFTDAKESSTVFELKRIVEGILKRPPDEQRLYKDDQLLDDGKTLGECGFTSQTARPQAPATVGLAFRADDTFEALCIEPFSSPPELPDVMKPQDSGSSANEQAVQ.

Met1 is subject to N-acetylmethionine. The Ubiquitin-like domain occupies 1–66 (MDVFLMIRRH…LGECGFTSQT (66 aa)). At Thr84 the chain carries Phosphothreonine. Positions 92-118 (PFSSPPELPDVMKPQDSGSSANEQAVQ) are disordered. Polar residues predominate over residues 107-118 (DSGSSANEQAVQ). 2 positions are modified to phosphoserine: Ser108 and Ser111.

It belongs to the Elongin B family. As to quaternary structure, heterotrimer of an A (ELOA, ELOA2 or ELOA3P), ELOB and ELOC subunit. The elongin BC complex interacts with EPOP; leading to recruit the elongin BC complex to Polycomb group (PcG) target genes, thereby restricting excessive activity of the PRC2/EED-EZH2 complex. Component of multiple cullin-RING E3 ubiquitin-protein ligase complexes composed of Elongin BC (ELOB and ELOC), a cullin (either CUL2 or CUL5), a catalytic subunit (either RBX1 or RNF7/RBX2), as well as a substrate adapter protein that can be either ASB2, ASB9, ASB11, KLHDC2, KLHDC3, KLHDC10, APPBP2, FEM1A, FEM1B, FEM1C, LRR1, PCMTD1, SOCS1, SOCS2, SOCS5, SPSB1, SPSB3, ELOA, VHL, WSB1 or RAB40C. As part of the Elongin BC E3 ubiquitin ligase complex; interacts with NRBP1. May also interact with DCUN1D1, DCUN1D2, DCUN1D3 and DCUN1D5. May form oligomers as a KLHDC2/KLHDC3-ELOB-ELOC complex; this interaction is autoinhibitory for the E3 ligase complex as the substrate-binding site of KLHDC2/KLHDC3 is blocked in the oligomer. In terms of assembly, (Microbial infection) Following infection by HIV-1 virus, component of a cullin-5-RING E3 ubiquitin-protein ligase complex (ECS complex) hijacked by the HIV-1 Vif protein. (Microbial infection) Substrate adapter protein can be a viral protein such as HIV Vif. As to quaternary structure, (Microbial infection) Interacts with molluscum contagiosum virus MC132. In terms of assembly, (Microbial infection) Interacts with herpes virus 8 virus protein LANA1.

The protein resides in the nucleus. The protein operates within protein modification; protein ubiquitination. Functionally, SIII, also known as elongin, is a general transcription elongation factor that increases the RNA polymerase II transcription elongation past template-encoded arresting sites. Subunit A is transcriptionally active and its transcription activity is strongly enhanced by binding to the dimeric complex of the SIII regulatory subunits B and C (elongin BC complex). In embryonic stem cells, the elongin BC complex is recruited by EPOP to Polycomb group (PcG) target genes in order generate genomic region that display both active and repressive chromatin properties, an important feature of pluripotent stem cells. Core component of multiple cullin-2 and cullin-5-RING E3 ubiquitin-protein ligase complexes (ECS complexes), which mediate the ubiquitination of target proteins. By binding to BC-box motifs it seems to link target recruitment subunits, like VHL and members of the SOCS box family, to Cullin/RBX1 modules that activate E2 ubiquitination enzymes. Component the von Hippel-Lindau ubiquitination complex CBC(VHL). A number of ECS complexes (containing either KLHDC2, KLHDC3, KLHDC10, APPBP2, FEM1A, FEM1B or FEM1C as substrate-recognition component) are part of the DesCEND (destruction via C-end degrons) pathway, which recognizes a C-degron located at the extreme C terminus of target proteins, leading to their ubiquitination and degradation. The ECS(ASB9) complex mediates ubiquitination and degradation of CKB. As part of a multisubunit ubiquitin ligase complex, polyubiquitinates monoubiquitinated POLR2A. ECS(LRR1) ubiquitinates MCM7 and promotes CMG replisome disassembly by VCP and chromatin extraction during S-phase. As part of the ECS(RAB40C) complex, mediates ANKRD28 ubiquitination and degradation, thereby inhibiting protein phosphatase 6 (PP6) complex activity and focal adhesion assembly during cell migration. Its function is as follows. (Microbial infection) Following infection by HIV-1 virus, component of a cullin-5-RING E3 ubiquitin-protein ligase complex (ECS complex) hijacked by the HIV-1 Vif protein, which catalyzes ubiquitination and degradation of APOBEC3F and APOBEC3G. The complex can also ubiquitinate APOBEC3H to some extent. The sequence is that of Elongin-B from Homo sapiens (Human).